Consider the following 496-residue polypeptide: Glycerol kinase (496 aa).

Thr-12 is a binding site for ADP. Residues Thr-12, Thr-13, and Ser-14 each contribute to the ATP site. Residue Thr-12 participates in sn-glycerol 3-phosphate binding. Residue Arg-16 coordinates ADP. Sn-glycerol 3-phosphate-binding residues include Arg-82, Glu-83, and Tyr-134. Glycerol contacts are provided by Arg-82, Glu-83, and Tyr-134. Residue His-230 is modified to Phosphohistidine; by HPr. Residue Asp-244 coordinates sn-glycerol 3-phosphate. Glycerol-binding residues include Asp-244 and Gln-245. 2 residues coordinate ADP: Thr-266 and Gly-309. Thr-266, Gly-309, Gln-313, and Gly-410 together coordinate ATP. The ADP site is built by Gly-410 and Asn-414.

This sequence belongs to the FGGY kinase family. Homotetramer and homodimer (in equilibrium). The phosphoenolpyruvate-dependent sugar phosphotransferase system (PTS), including enzyme I, and histidine-containing protein (HPr) are required for the phosphorylation, which leads to the activation of the enzyme.

It carries out the reaction glycerol + ATP = sn-glycerol 3-phosphate + ADP + H(+). The protein operates within polyol metabolism; glycerol degradation via glycerol kinase pathway; sn-glycerol 3-phosphate from glycerol: step 1/1. Activated by phosphorylation and inhibited by fructose 1,6-bisphosphate (FBP). In terms of biological role, key enzyme in the regulation of glycerol uptake and metabolism. Catalyzes the phosphorylation of glycerol to yield sn-glycerol 3-phosphate. The chain is Glycerol kinase from Bacillus cereus (strain G9842).